We begin with the raw amino-acid sequence, 276 residues long: Rhomboid protease GlpG (276 aa).

Transmembrane regions (helical) follow at residues 96–116, 142–162, 169–189, 192–212, 229–249, and 250–270; these read VTWLIMIACILVFVVMSIVGA, AFMHFSLMHILFNLLWWWYIG, LGSGKLIVITVISALLSGYVQ, FSGPWFGGLSGVVYALMGYAW, LIAFALIWIVAGWFDVFGMSM, and ANGAHIAGLAVGLAMAFADTV. The active-site Nucleophile is the S201. Residue H254 is part of the active site.

It belongs to the peptidase S54 family.

It localises to the cell inner membrane. It catalyses the reaction Cleaves type-1 transmembrane domains using a catalytic dyad composed of serine and histidine that are contributed by different transmembrane domains.. Functionally, rhomboid-type serine protease that catalyzes intramembrane proteolysis. The polypeptide is Rhomboid protease GlpG (Citrobacter koseri (strain ATCC BAA-895 / CDC 4225-83 / SGSC4696)).